The primary structure comprises 88 residues: Acyl-CoA-binding domain-containing protein 7 (88 aa).

Residues leucine 3–isoleucine 88 enclose the ACB domain. Residues arginine 15, tyrosine 30–lysine 34, lysine 56, and tyrosine 75 contribute to the an acyl-CoA site.

This sequence belongs to the ACBD7 family.

Its function is as follows. Binds medium- and long-chain acyl-CoA esters. This chain is Acyl-CoA-binding domain-containing protein 7 (Acbd7), found in Mus musculus (Mouse).